The following is an 88-amino-acid chain: Phosphocarrier protein HPr (88 aa).

Residues 1–88 (MEQNSYVIID…DVLSKEGLTK (88 aa)) form the HPr domain. His-15 functions as the Pros-phosphohistidine intermediate in the catalytic mechanism. At Ser-46 the chain carries Phosphoserine; by HPrK/P.

The protein localises to the cytoplasm. Phosphorylation on Ser-46 inhibits the phosphoryl transfer from enzyme I to HPr. General (non sugar-specific) component of the phosphoenolpyruvate-dependent sugar phosphotransferase system (sugar PTS). This major carbohydrate active-transport system catalyzes the phosphorylation of incoming sugar substrates concomitantly with their translocation across the cell membrane. The phosphoryl group from phosphoenolpyruvate (PEP) is transferred to the phosphoryl carrier protein HPr by enzyme I. Phospho-HPr then transfers it to the PTS EIIA domain. In terms of biological role, P-Ser-HPr interacts with the catabolite control protein A (CcpA), forming a complex that binds to DNA at the catabolite response elements cre, operator sites preceding a large number of catabolite-regulated genes. Thus, P-Ser-HPr is a corepressor in carbon catabolite repression (CCR), a mechanism that allows bacteria to coordinate and optimize the utilization of available carbon sources. P-Ser-HPr also plays a role in inducer exclusion, in which it probably interacts with several non-PTS permeases and inhibits their transport activity. The protein is Phosphocarrier protein HPr (ptsH) of Staphylococcus aureus (strain MSSA476).